Consider the following 94-residue polypeptide: Small ribosomal subunit protein bS6 (94 aa).

This sequence belongs to the bacterial ribosomal protein bS6 family.

In terms of biological role, binds together with bS18 to 16S ribosomal RNA. This chain is Small ribosomal subunit protein bS6, found in Phytoplasma mali (strain AT).